We begin with the raw amino-acid sequence, 700 residues long: Methionine--tRNA ligase (700 aa).

The short motif at 12–22 (PYANGNFHIGH) is the 'HIGH' region element. Zn(2+) is bound by residues Cys143, Cys146, Cys156, and Cys159. The 'KMSKS' region signature appears at 348-352 (KMSKS). Lys351 lines the ATP pocket. The tRNA-binding domain maps to 594–700 (DFSKIDLRIA…AGAQPGMRVH (107 aa)).

The protein belongs to the class-I aminoacyl-tRNA synthetase family. MetG type 1 subfamily. In terms of assembly, homodimer. The cofactor is Zn(2+).

Its subcellular location is the cytoplasm. It catalyses the reaction tRNA(Met) + L-methionine + ATP = L-methionyl-tRNA(Met) + AMP + diphosphate. Functionally, is required not only for elongation of protein synthesis but also for the initiation of all mRNA translation through initiator tRNA(fMet) aminoacylation. This is Methionine--tRNA ligase from Albidiferax ferrireducens (strain ATCC BAA-621 / DSM 15236 / T118) (Rhodoferax ferrireducens).